The primary structure comprises 142 residues: Large ribosomal subunit protein mL42 (142 aa).

Residues 1-32 constitute a mitochondrion transit peptide; that stretch reads MAVAAVKWVMSKRTILKHLFPVQNGALYCVCH.

It belongs to the mitochondrion-specific ribosomal protein mL42 family. Component of the mitochondrial large ribosomal subunit (mt-LSU). Mature mammalian 55S mitochondrial ribosomes consist of a small (28S) and a large (39S) subunit. The 28S small subunit contains a 12S ribosomal RNA (12S mt-rRNA) and 30 different proteins. The 39S large subunit contains a 16S rRNA (16S mt-rRNA), a copy of mitochondrial valine transfer RNA (mt-tRNA(Val)), which plays an integral structural role, and 52 different proteins.

It localises to the mitochondrion. The chain is Large ribosomal subunit protein mL42 (MRPL42) from Homo sapiens (Human).